The sequence spans 67 residues: Archaeal histone HAN1 subunit A (67 aa).

Interaction with DNA stretches follow at residues 20-22 (RVS) and 54-57 (KTVK).

The protein belongs to the archaeal histone HMF family. As to quaternary structure, heterodimer. Dimers then assemble into higher oligomers, with the DNA wrapped around the protein core.

The protein resides in the cytoplasm. Its subcellular location is the chromosome. Binds and compact DNA (95 to 150 base pairs) to form nucleosome-like structures that contain positive DNA supercoils. Increases the resistance of DNA to thermal denaturation (in vitro). The polypeptide is Archaeal histone HAN1 subunit A (han1A) (Thermococcus zilligii).